Here is a 96-residue protein sequence, read N- to C-terminus: Secreted RxLR effector protein 123 (96 aa).

The signal sequence occupies residues 1–22 (MVGAYYVGIALLVAGGSQTAAG). The RxLR-dEER motif lies at 49–70 (RFLRKSRNPKDNLMLSEANEER). Positions 57–96 (PKDNLMLSEANEERTPSSPSNSLTEFIVSEPITTNVMRTE) are disordered. Polar residues predominate over residues 87 to 96 (PITTNVMRTE).

This sequence belongs to the RxLR effector family.

It is found in the secreted. Its subcellular location is the host nucleus. The protein localises to the host cytoplasm. Its function is as follows. Secreted effector that dos not suppress the host cell death induced by cell death-inducing proteins. The protein is Secreted RxLR effector protein 123 of Plasmopara viticola (Downy mildew of grapevine).